Here is a 205-residue protein sequence, read N- to C-terminus: Dephospho-CoA kinase (205 aa).

In terms of domain architecture, DPCK spans 7–205; that stretch reads IIGITGRIAS…QEIINYERFE (199 aa). 15–20 lines the ATP pocket; sequence ASGKDA.

This sequence belongs to the CoaE family.

Its subcellular location is the cytoplasm. It catalyses the reaction 3'-dephospho-CoA + ATP = ADP + CoA + H(+). Its pathway is cofactor biosynthesis; coenzyme A biosynthesis; CoA from (R)-pantothenate: step 5/5. Catalyzes the phosphorylation of the 3'-hydroxyl group of dephosphocoenzyme A to form coenzyme A. This Borrelia garinii subsp. bavariensis (strain ATCC BAA-2496 / DSM 23469 / PBi) (Borreliella bavariensis) protein is Dephospho-CoA kinase.